The following is a 284-amino-acid chain: 2-dehydro-3-deoxyphosphooctonate aldolase (284 aa).

This sequence belongs to the KdsA family.

The protein resides in the cytoplasm. The catalysed reaction is D-arabinose 5-phosphate + phosphoenolpyruvate + H2O = 3-deoxy-alpha-D-manno-2-octulosonate-8-phosphate + phosphate. Its pathway is carbohydrate biosynthesis; 3-deoxy-D-manno-octulosonate biosynthesis; 3-deoxy-D-manno-octulosonate from D-ribulose 5-phosphate: step 2/3. The protein operates within bacterial outer membrane biogenesis; lipopolysaccharide biosynthesis. The sequence is that of 2-dehydro-3-deoxyphosphooctonate aldolase from Escherichia fergusonii (strain ATCC 35469 / DSM 13698 / CCUG 18766 / IAM 14443 / JCM 21226 / LMG 7866 / NBRC 102419 / NCTC 12128 / CDC 0568-73).